The primary structure comprises 188 residues: Sulfopyruvate decarboxylase subunit beta (188 aa).

This sequence belongs to the TPP enzyme family. In terms of assembly, heterododecamer composed of 6 subunits alpha and 6 subunits beta. Thiamine diphosphate is required as a cofactor.

It catalyses the reaction 3-sulfopyruvate + H(+) = sulfoacetaldehyde + CO2. It participates in cofactor biosynthesis; coenzyme M biosynthesis; sulfoacetaldehyde from phosphoenolpyruvate and sulfite: step 4/4. Its activity is regulated as follows. Inhibited by oxygen when heated in air at 80 degrees Celsius. The enzyme is reactivated by addition of dithionite. Its function is as follows. Involved in the biosynthesis of the coenzyme M (2-mercaptoethanesulfonic acid). Catalyzes the decarboxylation of sulfopyruvate to sulfoacetaldehyde. The chain is Sulfopyruvate decarboxylase subunit beta from Methanocaldococcus jannaschii (strain ATCC 43067 / DSM 2661 / JAL-1 / JCM 10045 / NBRC 100440) (Methanococcus jannaschii).